Consider the following 163-residue polypeptide: uncharacterized protein (163 aa).

Topologically, residues 1 to 33 (MKTLDKITNYDLFDFADEFLKFVPVFRPNPTVT) are cytoplasmic. A helical transmembrane segment spans residues 34–54 (CLFGNPLTNLLVNGTGAACFF). Topologically, residues 55-117 (EFCSLALIKV…SLGMALPDDD (63 aa)) are extracellular. A helical membrane pass occupies residues 118 to 138 (VLLSITFWFLCNSSFSILFVF). Topologically, residues 139–163 (ELRIFLRTVNNLLVVFLSVLKRNDL) are cytoplasmic.

The protein localises to the membrane. This is an uncharacterized protein from Saccharomyces cerevisiae (strain ATCC 204508 / S288c) (Baker's yeast).